Consider the following 294-residue polypeptide: Nucleotide-binding protein CLD_1131 (294 aa).

An ATP-binding site is contributed by 8–15 (GLSGAGKT). 59-62 (DIRG) is a GTP binding site.

The protein belongs to the RapZ-like family.

In terms of biological role, displays ATPase and GTPase activities. In Clostridium botulinum (strain Okra / Type B1), this protein is Nucleotide-binding protein CLD_1131.